The chain runs to 145 residues: Selenoprotein M (145 aa).

A signal peptide spans 1–23; that stretch reads MSLLLPPLALLLLLAALVAPATA. Active-site nucleophile residues include Cys-45 and Sec-48. The cysteinyl-selenocysteine (Cys-Sec) cross-link spans 45–48; that stretch reads CGGU. Sec-48 is a non-standard amino acid (selenocysteine).

It belongs to the selenoprotein M/F family. As to expression, widely expressed.

The protein resides in the cytoplasm. It localises to the perinuclear region. The protein localises to the endoplasmic reticulum. It is found in the golgi apparatus. In terms of biological role, may function as a thiol-disulfide oxidoreductase that participates in disulfide bond formation. The chain is Selenoprotein M from Homo sapiens (Human).